Consider the following 559-residue polypeptide: 2,3-bisphosphoglycerate-independent phosphoglycerate mutase (559 aa).

Mn(2+) is bound by residues Asp28 and Ser81. Residue Ser81 is the Phosphoserine intermediate of the active site. Substrate contacts are provided by residues His140, 170-171 (RD), Arg206, Arg213, 286-289 (RADR), and Lys361. Residues Asp430, His434, Asp471, His472, and His501 each coordinate Mn(2+).

This sequence belongs to the BPG-independent phosphoglycerate mutase family. Monomer. Mn(2+) is required as a cofactor.

The protein resides in the cytoplasm. The enzyme catalyses (2R)-2-phosphoglycerate = (2R)-3-phosphoglycerate. Its pathway is carbohydrate degradation; glycolysis; pyruvate from D-glyceraldehyde 3-phosphate: step 3/5. In terms of biological role, catalyzes the interconversion of 2-phosphoglycerate and 3-phosphoglycerate. The polypeptide is 2,3-bisphosphoglycerate-independent phosphoglycerate mutase (PGM1) (Mesembryanthemum crystallinum (Common ice plant)).